Reading from the N-terminus, the 180-residue chain is Large ribosomal subunit protein uL5 (180 aa).

The protein belongs to the universal ribosomal protein uL5 family. In terms of assembly, part of the 50S ribosomal subunit; part of the 5S rRNA/L5/L18/L25 subcomplex. Contacts the 5S rRNA and the P site tRNA. Forms a bridge to the 30S subunit in the 70S ribosome.

In terms of biological role, this is one of the proteins that bind and probably mediate the attachment of the 5S RNA into the large ribosomal subunit, where it forms part of the central protuberance. In the 70S ribosome it contacts protein S13 of the 30S subunit (bridge B1b), connecting the 2 subunits; this bridge is implicated in subunit movement. Contacts the P site tRNA; the 5S rRNA and some of its associated proteins might help stabilize positioning of ribosome-bound tRNAs. The polypeptide is Large ribosomal subunit protein uL5 (Synechocystis sp. (strain ATCC 27184 / PCC 6803 / Kazusa)).